The following is a 395-amino-acid chain: Small ribosomal subunit protein mS31 (395 aa).

The transit peptide at 1-65 (MFPRVSTFLP…IQRYFGTNSV (65 aa)) directs the protein to the mitochondrion. Disordered regions lie at residues 70–97 (KDKQ…NTKK) and 175–196 (SELL…DAKR). Basic and acidic residues predominate over residues 183-196 (QHEEESRAQRDAKR).

Belongs to the mitochondrion-specific ribosomal protein mS31 family. In terms of assembly, component of the mitochondrial small ribosomal subunit (mt-SSU). Mature mammalian 55S mitochondrial ribosomes consist of a small (28S) and a large (39S) subunit. The 28S small subunit contains a 12S ribosomal RNA (12S mt-rRNA) and 30 different proteins. The 39S large subunit contains a 16S rRNA (16S mt-rRNA), a copy of mitochondrial valine transfer RNA (mt-tRNA(Val)), which plays an integral structural role, and 52 different proteins.

The protein localises to the mitochondrion. The chain is Small ribosomal subunit protein mS31 (MRPS31) from Homo sapiens (Human).